The following is a 254-amino-acid chain: Putative cysteine-rich repeat secretory protein 37 (254 aa).

Residues 1–29 form the signal peptide; it reads MYSSYSLSKRLVSIPILAIQLLLIRSVSS. Gnk2-homologous domains are found at residues 36–138 and 145–251; these read YLNH…SIRS and YRNV…LYPF.

This sequence belongs to the cysteine-rich repeat secretory protein family.

The protein resides in the secreted. The sequence is that of Putative cysteine-rich repeat secretory protein 37 (CRRSP37) from Arabidopsis thaliana (Mouse-ear cress).